The chain runs to 604 residues: Dopamine receptor 3 (604 aa).

Residues 1-23 (MLTGQHHIPGIESPLMVVLWRVA) lie on the Extracellular side of the membrane. Residues 24 to 44 (AGVFLPLVPTMAVFGNVLVIL) traverse the membrane as a helical segment. Over 45–58 (SVYRERNLQTVTNM) the chain is Cytoplasmic. Residues 59-79 (LIVSLAVSDLFVAIGVMSFGV) traverse the membrane as a helical segment. Residues 80-96 (YYEWNGFKWGLGSFFCH) are Extracellular-facing. The cysteines at positions 95 and 170 are disulfide-linked. A helical membrane pass occupies residues 97-117 (VYQALDVACSTASILNLLAIS). Residues 118-141 (LDRYIAIGHPISYAQYGARGGRAM) lie on the Cytoplasmic side of the membrane. A helical transmembrane segment spans residues 142-162 (ISITIVWGVSCAVALPLLLGV). Residues 163 to 179 (NPMENDQCELANPWFNM) are Extracellular-facing. A helical transmembrane segment spans residues 180–200 (ISSIFSFFIPCIAMIILYTII). Residues 201–520 (FRRLRQRERA…TKQMRREHKA (320 aa)) are Cytoplasmic-facing. A disordered region spans residues 399 to 430 (SIQDEKKMNSRPPENPFAHQNGTNKQRLLPNP). The helical transmembrane segment at 521 to 541 (TVTLAVVLAVFLFCWLPFFIL) threads the bilayer. The Extracellular portion of the chain corresponds to 542–559 (HLSNSICLVIDSNSDCIG). Residues 560–580 (FLPLYLATWLGYLNSSLNPLI) traverse the membrane as a helical segment. Residues 581-604 (YTVFDQRFRNAFRNILSCGFFKKR) lie on the Cytoplasmic side of the membrane.

Belongs to the G-protein coupled receptor 1 family.

The protein localises to the cell membrane. In terms of biological role, receptor for dopamine. The activity of this receptor is mediated by G proteins which activate adenylyl cyclase. In terms of antagonist responses, would be classed with the D2-like dopamine receptor group. Mediates the effect of dopamine on the inhibition of locomotion. Acts as an antagonist of dop-1. This chain is Dopamine receptor 3, found in Caenorhabditis briggsae.